A 133-amino-acid chain; its full sequence is Carbohydrate-binding protein AWN (133 aa).

Ala1 carries the post-translational modification N-acetylalanine. 2 cysteine pairs are disulfide-bonded: Cys9-Cys30 and Cys53-Cys74. Positions 9–110 (CGGVLRDPPG…SPFHIYYYAD (102 aa)) constitute a CUB domain. Residues 73–110 (ICGGISLVFRSSSNIATIKYLRTSGQRASPFHIYYYAD) form a heparin-binding region.

This sequence belongs to the spermadhesin family.

Its subcellular location is the secreted. Functionally, mediates the binding of spermatozoa to component(s) of the egg's zona pellucida by a carbohydrate-binding mechanism. It is a secretory component of the male accessory glands being coated to the sperm surface at the time of ejaculation. The chain is Carbohydrate-binding protein AWN from Equus caballus (Horse).